A 43-amino-acid polypeptide reads, in one-letter code: Mu-conotoxin-like Cal 12.2c (43 aa).

A propeptide is located at residue Arg-1. 4 disulfide bridges follow: Cys-4/Cys-16, Cys-11/Cys-24, Cys-18/Cys-29, and Cys-23/Cys-35. The residue at position 31 (Trp-31) is a 6'-bromotryptophan. Pro-36 is modified (4-hydroxyproline). Trp-40 is modified (6'-bromotryptophan).

Expressed by the venom duct.

The protein resides in the secreted. Mu-conotoxins block voltage-gated sodium channels. This toxin reversibly blocks voltage-gated sodium channel in cephalopods, with no alteration in the voltage dependence of sodium conductance or on the kinetics of inactivation. This is Mu-conotoxin-like Cal 12.2c from Californiconus californicus (California cone).